Consider the following 256-residue polypeptide: BI1-like protein (256 aa).

The next 7 helical transmembrane spans lie at 53–73 (VYGILSAQLLLTTLISAVVVL), 85–105 (PGILLFLCIVPFILIWPLHIY), 113–133 (LILLALFTVSLSFTVGVSCAM), 138–158 (IVLQALILTLSVVGSLTAYTF), 167–187 (FSFLGPILFTSLIILVVTSFI), 189–209 (MFFPLGPTSVAVYGGFSALVF), and 228–248 (EYILASVALYLDILNLFLTIL).

This sequence belongs to the BI1 family.

Its subcellular location is the membrane. The chain is BI1-like protein from Arabidopsis thaliana (Mouse-ear cress).